We begin with the raw amino-acid sequence, 398 residues long: Glycosyltransferase GlyF (398 aa).

Residues 1–259 (MRKSIVLAAD…SEIAFQRSDL (259 aa)) are GT8 domain. Residues 8-13 (AADNAY) and 101-102 (DS) each bind UDP. Residues D101, D103, and H221 each coordinate Mn(2+). 221–227 (HYASHDK) lines the UDP pocket.

It in the N-terminal section; belongs to the glycosyltransferase 8 family.

Functionally, may be involved in the polymorphic O-glycosylation of the serine-rich repeat protein PsrP. Has hydrolytic activity against UDP-galactose and to a lesser extent against UDP-glucose; no glycosyltransferase activity has been seen with tested substrates. The protein is Glycosyltransferase GlyF of Streptococcus pneumoniae serotype 4 (strain ATCC BAA-334 / TIGR4).